The primary structure comprises 147 residues: Cyanate hydratase (147 aa).

Active-site residues include Arg88, Glu91, and Ser114.

The protein belongs to the cyanase family.

The catalysed reaction is cyanate + hydrogencarbonate + 3 H(+) = NH4(+) + 2 CO2. Functionally, catalyzes the reaction of cyanate with bicarbonate to produce ammonia and carbon dioxide. The protein is Cyanate hydratase of Thiobacillus denitrificans (strain ATCC 25259 / T1).